Consider the following 91-residue polypeptide: Large ribosomal subunit protein uL22 (91 aa).

It belongs to the universal ribosomal protein uL22 family. In terms of assembly, part of the 50S ribosomal subunit.

This protein binds specifically to 23S rRNA; its binding is stimulated by other ribosomal proteins, e.g. L4, L17, and L20. It is important during the early stages of 50S assembly. It makes multiple contacts with different domains of the 23S rRNA in the assembled 50S subunit and ribosome. In terms of biological role, the globular domain of the protein is located near the polypeptide exit tunnel on the outside of the subunit, while an extended beta-hairpin is found that lines the wall of the exit tunnel in the center of the 70S ribosome. The polypeptide is Large ribosomal subunit protein uL22 (rplV) (Loofah witches'-broom phytoplasma).